Reading from the N-terminus, the 272-residue chain is MSKHELSLVEVTHYTDPEVLAIVKDFHVRGNFASLPEFAERTFVSAVPLAHLEKFENKEVLFRPGFSSVINISSSHNFSRERLPSGINFCDKNKLSIRTIEKLLVNAFSSPDPGSVRRPYPSGGALYPIEVFLCRLSENTENWQAGTNVYHYLPLSQALEPVATCNTQSLYRSLSGGDSERLGKPHFALVYCIIFEKALFKYRYRGYRMALMETGSMYQNAVLVADQIGLKNRVWAGYTDSYVAKTMNLDQRTVAPLIVQFFGDVNDDKCLQ.

This sequence to R.leguminosarum TfxB which is involved in the processing of trifolitoxin.

Its subcellular location is the cytoplasm. Necessary to process the inactive microcin B17 (McbA) precursor into the active peptide. The protein is Microcin B17-processing protein McbC (mcbC) of Escherichia coli.